The chain runs to 376 residues: tRNA-specific 2-thiouridylase MnmA (376 aa).

ATP is bound by residues 17-24 (GMSGGVDS) and methionine 43. The segment at 103–105 (NPD) is interaction with target base in tRNA. Cysteine 108 (nucleophile) is an active-site residue. Residues cysteine 108 and cysteine 205 are joined by a disulfide bond. Position 132 (glycine 132) interacts with ATP. The interaction with tRNA stretch occupies residues 155–157 (KDQ). Cysteine 205 serves as the catalytic Cysteine persulfide intermediate. An interaction with tRNA region spans residues 315–316 (RY).

The protein belongs to the MnmA/TRMU family.

It localises to the cytoplasm. The enzyme catalyses S-sulfanyl-L-cysteinyl-[protein] + uridine(34) in tRNA + AH2 + ATP = 2-thiouridine(34) in tRNA + L-cysteinyl-[protein] + A + AMP + diphosphate + H(+). Its function is as follows. Catalyzes the 2-thiolation of uridine at the wobble position (U34) of tRNA, leading to the formation of s(2)U34. This Dichelobacter nodosus (strain VCS1703A) protein is tRNA-specific 2-thiouridylase MnmA.